Consider the following 435-residue polypeptide: Protein GOLM2 (435 aa).

At methionine 1 the chain carries N-acetylmethionine. The Cytoplasmic segment spans residues 1–14 (MVGFGANRRAGRLP). A helical; Signal-anchor for type II membrane protein membrane pass occupies residues 15-35 (SFVLVVLLVVIVVLAFNYWSI). A coiled-coil region spans residues 35–194 (ISSRHVLLQE…DQFLQEQKET (160 aa)). Residues 36 to 435 (SSRHVLLQEE…YGKQRFSDVL (400 aa)) lie on the Lumenal side of the membrane. Composition is skewed to basic and acidic residues over residues 191–212 (QKET…DHGA) and 223–239 (DANK…PHGK). 2 disordered regions span residues 191 to 239 (QKET…PHGK) and 271 to 435 (PPVL…SDVL). Serine 232 is subject to Phosphoserine. Composition is skewed to polar residues over residues 282–294 (QTIS…QPLS) and 302–320 (HLNQ…SNPL). The segment covering 343–361 (ATRDRANDFHKLKQSRFFD) has biased composition (basic and acidic residues). At serine 365 the chain carries Phosphoserine. Residues 398 to 417 (YNEEEDGDGGEEDVQDDEER) show a composition bias toward acidic residues. The segment covering 425 to 435 (DYGKQRFSDVL) has biased composition (basic and acidic residues).

It belongs to the GOLM family.

Its subcellular location is the membrane. The sequence is that of Protein GOLM2 from Mus musculus (Mouse).